We begin with the raw amino-acid sequence, 366 residues long: Ribosomal RNA large subunit methyltransferase M (366 aa).

S-adenosyl-L-methionine contacts are provided by residues Ser188, 221–224 (CPGG), Asp240, Asp260, and Asp277. The active-site Proton acceptor is Lys306.

It belongs to the class I-like SAM-binding methyltransferase superfamily. RNA methyltransferase RlmE family. RlmM subfamily. In terms of assembly, monomer.

It localises to the cytoplasm. The catalysed reaction is cytidine(2498) in 23S rRNA + S-adenosyl-L-methionine = 2'-O-methylcytidine(2498) in 23S rRNA + S-adenosyl-L-homocysteine + H(+). In terms of biological role, catalyzes the 2'-O-methylation at nucleotide C2498 in 23S rRNA. This chain is Ribosomal RNA large subunit methyltransferase M, found in Cronobacter sakazakii (strain ATCC BAA-894) (Enterobacter sakazakii).